A 539-amino-acid chain; its full sequence is MRVNNLTPQDLKAYGINDVQDIVYNPSYDTLYQEELNPGLEGYERGVLTNLGAVAVDTGIFTGRSPKDKYIVRDDTTRDTLWWSDKGKGKNDNKPLSQETWQHLKDLVTHQLSGKRLFVVDAFCGANADTRLSVRFITEVAWQAHFVKNMFIRPTDEELVNFKPDFIVMNGAKCTNPQWKEQGLNSENFVAFNLTERIQLIGGTWYGGEMKKGMFSVMNYLLPLKGIASMHCSANVGEKGDVAVFFGLSGTGKTTLSTDPKRRLIGDDEHGWDDDGVFNFEGGCYAKTIKLSKEAEPEIYHAIRRDALLENVTVREDGTVDFDDGSKTENTRVSYPIYHIDNIVKPVSKAGHATKVIFLTADAFGVLPPVSRLTANQTQYHFLSGFTAKLAGTERGVTEPTPTFSACFGAAFLSLHPTQYAEVLVKRMQAAGAQAYLVNTGWNGTGKRISIKDTRAIIDAILNGSLDNAETFRLPLFDLAIPTELPGVDTRILDPRNTYASPEQWQEKATALAKLFIENFEKYTDTPAGEALVTAGPKL.

The substrate site is built by Arg-64, Tyr-206, and Lys-212. Residues Lys-212, His-231, and 247–255 (GLSGTGKTT) each bind ATP. Residues Lys-212 and His-231 each contribute to the Mn(2+) site. Asp-268 serves as a coordination point for Mn(2+). ATP contacts are provided by residues Glu-296, Arg-332, 448–449 (RI), and Thr-454. Position 332 (Arg-332) interacts with substrate.

The protein belongs to the phosphoenolpyruvate carboxykinase (ATP) family. As to quaternary structure, monomer. It depends on Mn(2+) as a cofactor.

It is found in the cytoplasm. The enzyme catalyses oxaloacetate + ATP = phosphoenolpyruvate + ADP + CO2. Its pathway is carbohydrate biosynthesis; gluconeogenesis. Functionally, involved in the gluconeogenesis. Catalyzes the conversion of oxaloacetate (OAA) to phosphoenolpyruvate (PEP) through direct phosphoryl transfer between the nucleoside triphosphate and OAA. The polypeptide is Phosphoenolpyruvate carboxykinase (ATP) (Salmonella arizonae (strain ATCC BAA-731 / CDC346-86 / RSK2980)).